Consider the following 121-residue polypeptide: Small ribosomal subunit protein uS13 (121 aa).

Residues 94–121 (GLPVRGQNTKNNSRTRKGPRRTVANKKK) are disordered. Residues 106 to 121 (SRTRKGPRRTVANKKK) show a composition bias toward basic residues.

Belongs to the universal ribosomal protein uS13 family. Part of the 30S ribosomal subunit. Forms a loose heterodimer with protein S19. Forms two bridges to the 50S subunit in the 70S ribosome.

Located at the top of the head of the 30S subunit, it contacts several helices of the 16S rRNA. In the 70S ribosome it contacts the 23S rRNA (bridge B1a) and protein L5 of the 50S subunit (bridge B1b), connecting the 2 subunits; these bridges are implicated in subunit movement. Contacts the tRNAs in the A and P-sites. The sequence is that of Small ribosomal subunit protein uS13 from Exiguobacterium sibiricum (strain DSM 17290 / CCUG 55495 / CIP 109462 / JCM 13490 / 255-15).